The primary structure comprises 253 residues: Bridging integrator 3 (253 aa).

The 224-residue stretch at 9–232 (GQPKKQIVSK…LDQPGHSDEH (224 aa)) folds into the BAR domain. Coiled coils occupy residues 16–57 (VSKT…AMSK) and 120–151 (SLNM…KEKT).

It localises to the cytoplasm. The protein resides in the cytoskeleton. Involved in cytokinesis and septation where it has a role in the localization of F-actin. This Rattus norvegicus (Rat) protein is Bridging integrator 3 (Bin3).